The sequence spans 135 residues: Cytochrome c oxidase subunit 2 (135 aa).

Residues histidine 81, cysteine 116, cysteine 120, and histidine 124 each contribute to the Cu cation site.

Belongs to the cytochrome c oxidase subunit 2 family.

It is found in the cell membrane. It carries out the reaction 4 Fe(II)-[cytochrome c] + O2 + 8 H(+)(in) = 4 Fe(III)-[cytochrome c] + 2 H2O + 4 H(+)(out). In terms of biological role, subunits I and II form the functional core of the enzyme complex. Electrons originating in cytochrome c are transferred via heme a and Cu(A) to the binuclear center formed by heme a3 and Cu(B). The sequence is that of Cytochrome c oxidase subunit 2 (cbaB) from Thermus thermophilus.